We begin with the raw amino-acid sequence, 311 residues long: Homoserine kinase (311 aa).

Position 89–99 (89–99 (PFARGLGSSAT)) interacts with ATP.

This sequence belongs to the GHMP kinase family. Homoserine kinase subfamily.

The protein resides in the cytoplasm. It carries out the reaction L-homoserine + ATP = O-phospho-L-homoserine + ADP + H(+). It functions in the pathway amino-acid biosynthesis; L-threonine biosynthesis; L-threonine from L-aspartate: step 4/5. Its function is as follows. Catalyzes the ATP-dependent phosphorylation of L-homoserine to L-homoserine phosphate. In Halothermothrix orenii (strain H 168 / OCM 544 / DSM 9562), this protein is Homoserine kinase.